An 86-amino-acid polypeptide reads, in one-letter code: Co-chaperonin GroES (86 aa).

The protein belongs to the GroES chaperonin family. Heptamer of 7 subunits arranged in a ring. Interacts with the chaperonin GroEL.

The protein localises to the cytoplasm. In terms of biological role, together with the chaperonin GroEL, plays an essential role in assisting protein folding. The GroEL-GroES system forms a nano-cage that allows encapsulation of the non-native substrate proteins and provides a physical environment optimized to promote and accelerate protein folding. GroES binds to the apical surface of the GroEL ring, thereby capping the opening of the GroEL channel. The chain is Co-chaperonin GroES from Sulfurovum sp. (strain NBC37-1).